We begin with the raw amino-acid sequence, 473 residues long: Photosystem II CP43 reaction center protein (473 aa).

A propeptide spanning residues 1-14 is cleaved from the precursor; that stretch reads MKTLYSLRRFYPVE. Thr-15 is modified (N-acetylthreonine). Position 15 is a phosphothreonine (Thr-15). The next 5 membrane-spanning stretches (helical) occupy residues 69–93, 134–155, 178–200, 255–275, and 291–312; these read LFEVAHFVPEKPMYEQGLILLPHLA, LLGPETLEESFPFFGYVWKDRN, KALYFGGVYDTWAPGGGDVRKIT, KPFAWARRAFVWSGEAYLSYS, and WFNNTAYPSEFYGPTGPEASQA. Residue Glu-367 participates in [CaMn4O5] cluster binding. Residues 447-471 traverse the membrane as a helical segment; it reads RARAAAAGFEKGIDRDLEPVLSMTP.

The protein belongs to the PsbB/PsbC family. PsbC subfamily. As to quaternary structure, PSII is composed of 1 copy each of membrane proteins PsbA, PsbB, PsbC, PsbD, PsbE, PsbF, PsbH, PsbI, PsbJ, PsbK, PsbL, PsbM, PsbT, PsbX, PsbY, PsbZ, Psb30/Ycf12, at least 3 peripheral proteins of the oxygen-evolving complex and a large number of cofactors. It forms dimeric complexes. Binds multiple chlorophylls and provides some of the ligands for the Ca-4Mn-5O cluster of the oxygen-evolving complex. It may also provide a ligand for a Cl- that is required for oxygen evolution. PSII binds additional chlorophylls, carotenoids and specific lipids. is required as a cofactor.

The protein localises to the plastid. Its subcellular location is the chloroplast thylakoid membrane. In terms of biological role, one of the components of the core complex of photosystem II (PSII). It binds chlorophyll and helps catalyze the primary light-induced photochemical processes of PSII. PSII is a light-driven water:plastoquinone oxidoreductase, using light energy to abstract electrons from H(2)O, generating O(2) and a proton gradient subsequently used for ATP formation. This Phalaenopsis aphrodite subsp. formosana (Moth orchid) protein is Photosystem II CP43 reaction center protein.